The following is a 283-amino-acid chain: Acetylglutamate kinase (283 aa).

Substrate is bound by residues 64–65, Arg86, and Asn178; that span reads GG.

Belongs to the acetylglutamate kinase family. ArgB subfamily.

The protein resides in the cytoplasm. The catalysed reaction is N-acetyl-L-glutamate + ATP = N-acetyl-L-glutamyl 5-phosphate + ADP. The protein operates within amino-acid biosynthesis; L-arginine biosynthesis; N(2)-acetyl-L-ornithine from L-glutamate: step 2/4. Its function is as follows. Catalyzes the ATP-dependent phosphorylation of N-acetyl-L-glutamate. This chain is Acetylglutamate kinase, found in Lactococcus lactis subsp. lactis (strain IL1403) (Streptococcus lactis).